A 404-amino-acid polypeptide reads, in one-letter code: Phospho-N-acetylmuramoyl-pentapeptide-transferase (404 aa).

A run of 10 helical transmembrane segments spans residues 30–50 (SAAI…IIFF), 73–93 (IPTM…LLFA), 100–120 (IMLL…DDYI), 132–152 (GKFK…TLIF), 209–229 (YMWI…SNGA), 242–262 (TSAI…NVIF), 274–294 (LAEL…FLWY), 301–321 (IFMG…LAIV), 326–346 (LMIP…IIQV), and 381–401 (KIVT…LVTL).

Belongs to the glycosyltransferase 4 family. MraY subfamily. The cofactor is Mg(2+).

The protein resides in the cell inner membrane. It catalyses the reaction UDP-N-acetyl-alpha-D-muramoyl-L-alanyl-gamma-D-glutamyl-meso-2,6-diaminopimeloyl-D-alanyl-D-alanine + di-trans,octa-cis-undecaprenyl phosphate = di-trans,octa-cis-undecaprenyl diphospho-N-acetyl-alpha-D-muramoyl-L-alanyl-D-glutamyl-meso-2,6-diaminopimeloyl-D-alanyl-D-alanine + UMP. It functions in the pathway cell wall biogenesis; peptidoglycan biosynthesis. Its function is as follows. Catalyzes the initial step of the lipid cycle reactions in the biosynthesis of the cell wall peptidoglycan: transfers peptidoglycan precursor phospho-MurNAc-pentapeptide from UDP-MurNAc-pentapeptide onto the lipid carrier undecaprenyl phosphate, yielding undecaprenyl-pyrophosphoryl-MurNAc-pentapeptide, known as lipid I. In Amoebophilus asiaticus (strain 5a2), this protein is Phospho-N-acetylmuramoyl-pentapeptide-transferase.